A 225-amino-acid chain; its full sequence is Cytidylate kinase (225 aa).

Gly11–Thr19 contributes to the ATP binding site.

This sequence belongs to the cytidylate kinase family. Type 1 subfamily.

Its subcellular location is the cytoplasm. It carries out the reaction CMP + ATP = CDP + ADP. The enzyme catalyses dCMP + ATP = dCDP + ADP. This chain is Cytidylate kinase, found in Shouchella clausii (strain KSM-K16) (Alkalihalobacillus clausii).